Reading from the N-terminus, the 430-residue chain is Enolase (430 aa).

(2R)-2-phosphoglycerate is bound at residue Q163. The active-site Proton donor is E205. Positions 242, 288, and 315 each coordinate Mg(2+). The (2R)-2-phosphoglycerate site is built by K340, R369, S370, and K391. The active-site Proton acceptor is the K340.

Belongs to the enolase family. The cofactor is Mg(2+).

The protein localises to the cytoplasm. Its subcellular location is the secreted. It localises to the cell surface. It carries out the reaction (2R)-2-phosphoglycerate = phosphoenolpyruvate + H2O. Its pathway is carbohydrate degradation; glycolysis; pyruvate from D-glyceraldehyde 3-phosphate: step 4/5. Its function is as follows. Catalyzes the reversible conversion of 2-phosphoglycerate (2-PG) into phosphoenolpyruvate (PEP). It is essential for the degradation of carbohydrates via glycolysis. This chain is Enolase, found in Onion yellows phytoplasma (strain OY-M).